We begin with the raw amino-acid sequence, 598 residues long: Aspartate--tRNA(Asp/Asn) ligase (598 aa).

Glutamate 177 is an L-aspartate binding site. The segment at 201-204 (QLFK) is aspartate. Arginine 223 is a binding site for L-aspartate. ATP-binding positions include 223–225 (RDE) and glutamine 232. Position 456 (histidine 456) interacts with L-aspartate. Glutamate 493 provides a ligand contact to ATP. L-aspartate is bound at residue arginine 500. 545-548 (GLDR) is an ATP binding site.

Belongs to the class-II aminoacyl-tRNA synthetase family. Type 1 subfamily. Homodimer.

The protein resides in the cytoplasm. The enzyme catalyses tRNA(Asx) + L-aspartate + ATP = L-aspartyl-tRNA(Asx) + AMP + diphosphate. Aspartyl-tRNA synthetase with relaxed tRNA specificity since it is able to aspartylate not only its cognate tRNA(Asp) but also tRNA(Asn). Reaction proceeds in two steps: L-aspartate is first activated by ATP to form Asp-AMP and then transferred to the acceptor end of tRNA(Asp/Asn). This is Aspartate--tRNA(Asp/Asn) ligase from Prochlorococcus marinus (strain MIT 9215).